The following is an 89-amino-acid chain: Large ribosomal subunit protein bL31B (89 aa).

This sequence belongs to the bacterial ribosomal protein bL31 family. Type B subfamily. In terms of assembly, part of the 50S ribosomal subunit.

This Pseudomonas fluorescens (strain ATCC BAA-477 / NRRL B-23932 / Pf-5) protein is Large ribosomal subunit protein bL31B.